Consider the following 229-residue polypeptide: Uracil-DNA glycosylase (229 aa).

D64 (proton acceptor) is an active-site residue.

The protein belongs to the uracil-DNA glycosylase (UDG) superfamily. UNG family.

It is found in the cytoplasm. The catalysed reaction is Hydrolyzes single-stranded DNA or mismatched double-stranded DNA and polynucleotides, releasing free uracil.. Excises uracil residues from the DNA which can arise as a result of misincorporation of dUMP residues by DNA polymerase or due to deamination of cytosine. This chain is Uracil-DNA glycosylase, found in Klebsiella pneumoniae subsp. pneumoniae (strain ATCC 700721 / MGH 78578).